The primary structure comprises 256 residues: Imidazole glycerol phosphate synthase subunit HisF (256 aa).

Catalysis depends on residues Asp-11 and Asp-130.

The protein belongs to the HisA/HisF family. In terms of assembly, heterodimer of HisH and HisF.

Its subcellular location is the cytoplasm. The catalysed reaction is 5-[(5-phospho-1-deoxy-D-ribulos-1-ylimino)methylamino]-1-(5-phospho-beta-D-ribosyl)imidazole-4-carboxamide + L-glutamine = D-erythro-1-(imidazol-4-yl)glycerol 3-phosphate + 5-amino-1-(5-phospho-beta-D-ribosyl)imidazole-4-carboxamide + L-glutamate + H(+). It participates in amino-acid biosynthesis; L-histidine biosynthesis; L-histidine from 5-phospho-alpha-D-ribose 1-diphosphate: step 5/9. Functionally, IGPS catalyzes the conversion of PRFAR and glutamine to IGP, AICAR and glutamate. The HisF subunit catalyzes the cyclization activity that produces IGP and AICAR from PRFAR using the ammonia provided by the HisH subunit. This is Imidazole glycerol phosphate synthase subunit HisF from Cupriavidus necator (strain ATCC 17699 / DSM 428 / KCTC 22496 / NCIMB 10442 / H16 / Stanier 337) (Ralstonia eutropha).